The primary structure comprises 211 residues: SAGA-associated factor 11 homolog 2 (211 aa).

The SGF11-type zinc finger occupies 115–136; that stretch reads CTCPNCDRLVAAARFAPHLEKC. The segment at 149–211 is disordered; sequence RRLATKEGSS…GSKKNNGKTF (63 aa). Over residues 157 to 166 the composition is skewed to low complexity; that stretch reads SSASTSSTST. The residue at position 187 (serine 187) is a Phosphoserine. The segment covering 197–211 has biased composition (low complexity); it reads SSRNNGSKKNNGKTF.

This sequence belongs to the SGF11 family. As to quaternary structure, component of some SAGA transcription coactivator-HAT complexes, at least composed of Ada2b, not/nonstop, Pcaf/Gcn5, Sgf11 and Spt3. Within the SAGA complex, Sgf11, e(y)2, and not/nonstop form an additional subcomplex of SAGA called the DUB module (deubiquitination module). Interacts directly with not/nonstop. Interacts with the AMEX complex component xmas-2. Interacts with Cbp80; important for promoter recruitment of Sgf11 that is not associated with the DUB module.

The protein resides in the nucleus. It localises to the nucleoplasm. It is found in the cytoplasm. Its function is as follows. Component of the transcription regulatory histone acetylation (HAT) complex SAGA, a multiprotein complex that activates transcription by remodeling chromatin and mediating histone acetylation and deubiquitination. Within the SAGA complex, participates in a subcomplex that specifically deubiquitinates histone H2B. The SAGA complex is recruited to specific gene promoters by activators, where it is required for transcription. Required for nuclear receptor-mediated transactivation. Binds independently on SAGA to promoters in an RNA-dependent manner. Binds to mRNA and is essential for total mRNA export from the nucleus. Required to counteract heterochromatin silencing. Controls the development of neuronal connectivity in visual system by being required for accurate axon targeting in the optic lobe. Required for expression of ecdysone-induced genes such as br/broad. This is SAGA-associated factor 11 homolog 2 from Drosophila grimshawi (Hawaiian fruit fly).